The following is a 156-amino-acid chain: rRNA methyltransferase (156 aa).

Modifies 16S rRNA so making ribosomes resistant to certain aminoglycosides. The protein is rRNA methyltransferase (kamC) of Saccharopolyspora hirsuta.